A 218-amino-acid chain; its full sequence is Ribonuclease HII (218 aa).

Residues 13 to 202 (DLVAGVDEVG…VRAAHEARAT (190 aa)) form the RNase H type-2 domain. The a divalent metal cation site is built by Asp-19, Glu-20, and Asp-111.

This sequence belongs to the RNase HII family. Mn(2+) serves as cofactor. It depends on Mg(2+) as a cofactor.

The protein localises to the cytoplasm. The catalysed reaction is Endonucleolytic cleavage to 5'-phosphomonoester.. Endonuclease that specifically degrades the RNA of RNA-DNA hybrids. This Pseudomonas syringae pv. syringae (strain B728a) protein is Ribonuclease HII.